The chain runs to 586 residues: Major facilitator superfamily domain-containing protein 6-like (586 aa).

2 helical membrane passes run 50–70 (TLMG…AFLA) and 78–98 (ALLI…VLVP). A disordered region spans residues 133 to 160 (AQESASSHPAKRTAEVEMPGFRNPPGES). 9 helical membrane-spanning segments follow: residues 246–266 (FILS…LEQV), 287–307 (LWVW…ALVG), 326–346 (GYSV…IPIC), 361–381 (IVGG…VGAI), 400–420 (ELVM…LHPF), 433–455 (LVGL…WSWW), 456–476 (SVLP…WAVG), 499–519 (FYGS…MRFS), and 521–541 (AVLY…LLSI).

Belongs to the major facilitator superfamily. MFSD6 family.

The protein resides in the membrane. This is Major facilitator superfamily domain-containing protein 6-like (MFSD6L) from Homo sapiens (Human).